We begin with the raw amino-acid sequence, 76 residues long: Candidate secreted effector protein MPL124497 (76 aa).

Positions 1-21 (MKLIIFAAISVAFMSFDQVLG) are cleaved as a signal peptide.

This sequence belongs to the CPGH1 family.

The protein localises to the secreted. It localises to the host cell. The protein resides in the host cytoplasm. Its subcellular location is the host nucleus. Its function is as follows. Rust effector delivered into infected tissues to modulate host functions and contribute to pathogen virulence. Enhances leaf colonization by the bacteria Pseudomonas syringae and the oomycete Hyaloperonospora arabidopsidis pathogens in an Arabidopsis thaliana infection model. The sequence is that of Candidate secreted effector protein MPL124497 from Melampsora larici-populina (strain 98AG31 / pathotype 3-4-7) (Poplar leaf rust fungus).